Consider the following 87-residue polypeptide: Putative regulatory protein ABC2323 (87 aa).

It belongs to the RemA family.

In Shouchella clausii (strain KSM-K16) (Alkalihalobacillus clausii), this protein is Putative regulatory protein ABC2323.